A 184-amino-acid chain; its full sequence is Threonylcarbamoyl-AMP synthase (184 aa).

A YrdC-like domain is found at 1-184 (MNNLENIVEQ…IFTQHIFRQG (184 aa)).

This sequence belongs to the SUA5 family. TsaC subfamily.

It localises to the cytoplasm. It carries out the reaction L-threonine + hydrogencarbonate + ATP = L-threonylcarbamoyladenylate + diphosphate + H2O. Functionally, required for the formation of a threonylcarbamoyl group on adenosine at position 37 (t(6)A37) in tRNAs that read codons beginning with adenine. Catalyzes the conversion of L-threonine, HCO(3)(-)/CO(2) and ATP to give threonylcarbamoyl-AMP (TC-AMP) as the acyladenylate intermediate, with the release of diphosphate. This is Threonylcarbamoyl-AMP synthase from Actinobacillus pleuropneumoniae serotype 5b (strain L20).